The chain runs to 315 residues: MPVKIPDNLPAAEILESENIFVMSETRAANQDIRPMRVLILNLMPNKIETETQLLRLLGNTPLQVDVDLLRIHDKESKHTSIDHMNNFYRDFEQVRNKNYDGLIITGAPLGQIEFEDVSYWDHIREIIDWSQQHVTSVLFLCWAAHAALYHLYGLNRSLLTSKRSGVFAHQRTREHFPLLRGFDDEFYAPHSRFAEMDIEQLRSHPELQVLTESDEAGAYMVLSRSNRNLFVMGHPEYQKSTLKDEYERDLSQGLSPEIPQNYFGNDDPTQQPIARWHSHGSLLVSNWLNYYVYQLTPYNLDDMSGRTPWESAVL.

Cys-142 acts as the Acyl-thioester intermediate in catalysis. The substrate site is built by Lys-163 and Ser-192. The Proton acceptor role is filled by His-235. Residue Glu-237 is part of the active site. A substrate-binding site is contributed by Arg-249.

It belongs to the MetA family.

It is found in the cytoplasm. It catalyses the reaction L-homoserine + succinyl-CoA = O-succinyl-L-homoserine + CoA. The protein operates within amino-acid biosynthesis; L-methionine biosynthesis via de novo pathway; O-succinyl-L-homoserine from L-homoserine: step 1/1. Its function is as follows. Transfers a succinyl group from succinyl-CoA to L-homoserine, forming succinyl-L-homoserine. In Shewanella piezotolerans (strain WP3 / JCM 13877), this protein is Homoserine O-succinyltransferase.